A 283-amino-acid polypeptide reads, in one-letter code: Phosphatidylserine decarboxylase proenzyme (283 aa).

Residues Asp96, His152, and Ser250 each act as charge relay system; for autoendoproteolytic cleavage activity in the active site. Ser250 acts as the Schiff-base intermediate with substrate; via pyruvic acid; for decarboxylase activity in catalysis. Position 250 is a pyruvic acid (Ser); by autocatalysis (Ser250).

Belongs to the phosphatidylserine decarboxylase family. PSD-B subfamily. Prokaryotic type I sub-subfamily. Heterodimer of a large membrane-associated beta subunit and a small pyruvoyl-containing alpha subunit. It depends on pyruvate as a cofactor. In terms of processing, is synthesized initially as an inactive proenzyme. Formation of the active enzyme involves a self-maturation process in which the active site pyruvoyl group is generated from an internal serine residue via an autocatalytic post-translational modification. Two non-identical subunits are generated from the proenzyme in this reaction, and the pyruvate is formed at the N-terminus of the alpha chain, which is derived from the carboxyl end of the proenzyme. The autoendoproteolytic cleavage occurs by a canonical serine protease mechanism, in which the side chain hydroxyl group of the serine supplies its oxygen atom to form the C-terminus of the beta chain, while the remainder of the serine residue undergoes an oxidative deamination to produce ammonia and the pyruvoyl prosthetic group on the alpha chain. During this reaction, the Ser that is part of the protease active site of the proenzyme becomes the pyruvoyl prosthetic group, which constitutes an essential element of the active site of the mature decarboxylase.

Its subcellular location is the cell membrane. It catalyses the reaction a 1,2-diacyl-sn-glycero-3-phospho-L-serine + H(+) = a 1,2-diacyl-sn-glycero-3-phosphoethanolamine + CO2. It participates in phospholipid metabolism; phosphatidylethanolamine biosynthesis; phosphatidylethanolamine from CDP-diacylglycerol: step 2/2. Functionally, catalyzes the formation of phosphatidylethanolamine (PtdEtn) from phosphatidylserine (PtdSer). The polypeptide is Phosphatidylserine decarboxylase proenzyme (Acinetobacter baumannii (strain AB0057)).